The following is a 975-amino-acid chain: Glycine dehydrogenase (decarboxylating) (975 aa).

The residue at position 723 (lysine 723) is an N6-(pyridoxal phosphate)lysine.

It belongs to the GcvP family. In terms of assembly, the glycine cleavage system is composed of four proteins: P, T, L and H. Pyridoxal 5'-phosphate is required as a cofactor.

It carries out the reaction N(6)-[(R)-lipoyl]-L-lysyl-[glycine-cleavage complex H protein] + glycine + H(+) = N(6)-[(R)-S(8)-aminomethyldihydrolipoyl]-L-lysyl-[glycine-cleavage complex H protein] + CO2. In terms of biological role, the glycine cleavage system catalyzes the degradation of glycine. The P protein binds the alpha-amino group of glycine through its pyridoxal phosphate cofactor; CO(2) is released and the remaining methylamine moiety is then transferred to the lipoamide cofactor of the H protein. The protein is Glycine dehydrogenase (decarboxylating) of Burkholderia lata (strain ATCC 17760 / DSM 23089 / LMG 22485 / NCIMB 9086 / R18194 / 383).